A 428-amino-acid polypeptide reads, in one-letter code: Histidine--tRNA ligase (428 aa).

Belongs to the class-II aminoacyl-tRNA synthetase family. As to quaternary structure, homodimer.

The protein localises to the cytoplasm. The catalysed reaction is tRNA(His) + L-histidine + ATP = L-histidyl-tRNA(His) + AMP + diphosphate + H(+). In Pseudomonas entomophila (strain L48), this protein is Histidine--tRNA ligase.